A 162-amino-acid polypeptide reads, in one-letter code: Putative pre-16S rRNA nuclease (162 aa).

It belongs to the YqgF nuclease family.

The protein localises to the cytoplasm. Could be a nuclease involved in processing of the 5'-end of pre-16S rRNA. The protein is Putative pre-16S rRNA nuclease of Brucella melitensis biotype 1 (strain ATCC 23456 / CCUG 17765 / NCTC 10094 / 16M).